The chain runs to 38 residues: Photosystem II reaction center protein X (38 aa).

Residues 8-28 (FLWSLVAGAVVLGALFGAIIF) form a helical membrane-spanning segment.

This sequence belongs to the PsbX family. Type 1 subfamily. PSII is composed of 1 copy each of membrane proteins PsbA, PsbB, PsbC, PsbD, PsbE, PsbF, PsbH, PsbI, PsbJ, PsbK, PsbL, PsbM, PsbT, PsbX, PsbY, PsbZ, Psb30/Ycf12, peripheral proteins PsbO, CyanoQ (PsbQ), PsbU, PsbV and a large number of cofactors. It forms dimeric complexes.

The protein localises to the cellular thylakoid membrane. In terms of biological role, involved in the binding and/or turnover of quinones at the Q(B) site of photosystem II (PSII). PSII is a light-driven water plastoquinone oxidoreductase, using light energy to abstract electrons from H(2)O, generating a proton gradient subsequently used for ATP formation. In Synechococcus sp. (strain JA-2-3B'a(2-13)) (Cyanobacteria bacterium Yellowstone B-Prime), this protein is Photosystem II reaction center protein X.